A 390-amino-acid polypeptide reads, in one-letter code: Chorismate synthase 1 (390 aa).

2 residues coordinate NADP(+): arginine 39 and arginine 45. Positions 95-117 (EQEEKEMKRKVTKPRPGHADLNG) are disordered. FMN contacts are provided by residues 132–134 (RSS), 253–254 (NA), glycine 298, 313–317 (KPIPT), and arginine 339.

The protein belongs to the chorismate synthase family. Homotetramer. It depends on FMNH2 as a cofactor.

It carries out the reaction 5-O-(1-carboxyvinyl)-3-phosphoshikimate = chorismate + phosphate. The protein operates within metabolic intermediate biosynthesis; chorismate biosynthesis; chorismate from D-erythrose 4-phosphate and phosphoenolpyruvate: step 7/7. Functionally, catalyzes the anti-1,4-elimination of the C-3 phosphate and the C-6 proR hydrogen from 5-enolpyruvylshikimate-3-phosphate (EPSP) to yield chorismate, which is the branch point compound that serves as the starting substrate for the three terminal pathways of aromatic amino acid biosynthesis. This reaction introduces a second double bond into the aromatic ring system. The chain is Chorismate synthase 1 from Bacillus cereus (strain ZK / E33L).